The sequence spans 353 residues: Photosystem II D2 protein (353 aa).

An N-acetylthreonine modification is found at Thr2. Thr2 is subject to Phosphothreonine. A helical membrane pass occupies residues 41–61 (CAYFALGGWFTGTTFVTSWYT). Residue His118 participates in chlorophyll a binding. Residues 125 to 141 (GFMLRQFELARSVQLRP) form a helical membrane-spanning segment. Pheophytin a contacts are provided by Gln130 and Asn143. A helical transmembrane segment spans residues 153–166 (VFVSVFLIYPLGQS). His198 is a binding site for chlorophyll a. Residues 208–228 (AALLCAIHGATVENTLFEDGD) form a helical membrane-spanning segment. Residues His215 and Phe262 each contribute to the a plastoquinone site. His215 is a Fe cation binding site. A Fe cation-binding site is contributed by His269. A helical membrane pass occupies residues 279–295 (GLWMSALGVVGLALNLR).

It belongs to the reaction center PufL/M/PsbA/D family. In terms of assembly, PSII is composed of 1 copy each of membrane proteins PsbA, PsbB, PsbC, PsbD, PsbE, PsbF, PsbH, PsbI, PsbJ, PsbK, PsbL, PsbM, PsbT, PsbX, PsbY, PsbZ, Psb30/Ycf12, at least 3 peripheral proteins of the oxygen-evolving complex and a large number of cofactors. It forms dimeric complexes. The D1/D2 heterodimer binds P680, chlorophylls that are the primary electron donor of PSII, and subsequent electron acceptors. It shares a non-heme iron and each subunit binds pheophytin, quinone, additional chlorophylls, carotenoids and lipids. There is also a Cl(-1) ion associated with D1 and D2, which is required for oxygen evolution. The PSII complex binds additional chlorophylls, carotenoids and specific lipids. serves as cofactor.

It is found in the plastid. The protein resides in the chloroplast thylakoid membrane. The catalysed reaction is 2 a plastoquinone + 4 hnu + 2 H2O = 2 a plastoquinol + O2. Photosystem II (PSII) is a light-driven water:plastoquinone oxidoreductase that uses light energy to abstract electrons from H(2)O, generating O(2) and a proton gradient subsequently used for ATP formation. It consists of a core antenna complex that captures photons, and an electron transfer chain that converts photonic excitation into a charge separation. The D1/D2 (PsbA/PsbD) reaction center heterodimer binds P680, the primary electron donor of PSII as well as several subsequent electron acceptors. D2 is needed for assembly of a stable PSII complex. The sequence is that of Photosystem II D2 protein from Populus trichocarpa (Western balsam poplar).